Consider the following 481-residue polypeptide: Sialic acid-binding Ig-like lectin 16 (481 aa).

An N-terminal signal peptide occupies residues 1-16; the sequence is MLLLPLLLPVLGAGSL. Topologically, residues 17-434 are extracellular; sequence NKDPSYSLQV…VHCKSGPMTG (418 aa). Residues 19 to 122 enclose the Ig-like V-type domain; that stretch reads DPSYSLQVQR…DEAWYFFRVE (104 aa). 4 cysteine pairs are disulfide-bonded: C37–C174, C42–C102, C165–C216, and C259–C306. N-linked (GlcNAc...) asparagine glycosylation is found at N43 and N78. R120 provides a ligand contact to N-acetylneuraminate. Ig-like C2-type domains follow at residues 147-232, 238-322, and 327-424; these read PDVY…RTVR, LELQ…LDLS, and PENL…LSFS. N338 and N347 each carry an N-linked (GlcNAc...) asparagine glycan. A disulfide bridge connects residues C363 and C408. A helical membrane pass occupies residues 435–455; it reads VVLVAVGEVAMKILLLCLCLI. The Cytoplasmic segment spans residues 456–481; it reads LLRVRSCRRKAARAALGMEAADAVTD.

Belongs to the immunoglobulin superfamily. SIGLEC (sialic acid binding Ig-like lectin) family. As to expression, expressed in bone marrow, fetal brain, fetal liver, lung and salivary gland. Detected in brain, macrophage, cancerous esophagus and lung at protein level.

It is found in the membrane. Putative adhesion molecule that mediates sialic-acid dependent binding to cells. In Homo sapiens (Human), this protein is Sialic acid-binding Ig-like lectin 16 (SIGLEC16).